The primary structure comprises 527 residues: EGF domain-specific O-linked N-acetylglucosamine transferase (527 aa).

The N-terminal stretch at 1-19 (MLMLLVFGVLLHEVPLSGQ) is a signal peptide. The Required for optimal activity motif lies at 295 to 297 (DYD). An N-linked (GlcNAc...) asparagine glycan is attached at Asn-354. The Prevents secretion from ER motif lies at 524-527 (HDEL).

This sequence belongs to the glycosyltransferase 61 family.

Its subcellular location is the endoplasmic reticulum lumen. It catalyses the reaction L-seryl-[protein] + UDP-N-acetyl-alpha-D-glucosamine = 3-O-(N-acetyl-beta-D-glucosaminyl)-L-seryl-[protein] + UDP + H(+). The catalysed reaction is L-threonyl-[protein] + UDP-N-acetyl-alpha-D-glucosamine = 3-O-(N-acetyl-beta-D-glucosaminyl)-L-threonyl-[protein] + UDP + H(+). Its function is as follows. Catalyzes the transfer of a single N-acetylglucosamine from UDP-GlcNAc to a serine or threonine residue in extracellular proteins resulting in their modification with a beta-linked N-acetylglucosamine (O-GlcNAc). Specifically glycosylates the Thr residue located between the fifth and sixth conserved cysteines of folded EGF-like domains. This is EGF domain-specific O-linked N-acetylglucosamine transferase (Eogt) from Rattus norvegicus (Rat).